The following is a 485-amino-acid chain: E3 ubiquitin-protein ligase TRIM34B (485 aa).

The RING-type zinc-finger motif lies at 15–58 (CPVCQELLTKALSLGCGHLVCQACLISNKNAVINPRGKSSCPVC). Residues 91 to 127 (TKRDLCVHHGEKLLLFCKEDKKVICWVCERSQEHRGH) form a B box-type zinc finger. Zn(2+) contacts are provided by C96, H99, C118, and H124. Residues 136 to 170 (VRECQENLQKALTRLRKEQEKVETLEADIKEDRLS) adopt a coiled-coil conformation. The B30.2/SPRY domain maps to 282-485 (LSGMLQKFRE…APMTLCPLNS (204 aa)).

It belongs to the TRIM/RBCC family. Homotrimer. Interacts (via B-box and SPRY domain) with TRIM5.

Its subcellular location is the cytoplasm. It localises to the mitochondrion. The catalysed reaction is S-ubiquitinyl-[E2 ubiquitin-conjugating enzyme]-L-cysteine + [acceptor protein]-L-lysine = [E2 ubiquitin-conjugating enzyme]-L-cysteine + N(6)-ubiquitinyl-[acceptor protein]-L-lysine.. It functions in the pathway protein modification; protein ubiquitination. Functionally, functions as antiviral protein and contributes to the defense against retroviral infections. Acts as a capsid-specific restriction factor with the help of TRIM5 and prevents infection from non-host-adapted retroviruses. During influenza A virus infection, promotes programmed cell death by targeting ZBP1 for 'Lys-63'-linked polyubiquitination. In turn, promotes ZBP1 recruitment of RIPK3 to mediate virus-induced programmed necrosis. Negatively regulates the function of mitochondria by enhancing mitochondrial depolarization leading to cytochrome c release and mitochondria-dependent apoptosis. Also promotes the formation of multinucleated giant cells by means of cell fusion and phagocytosis in epithelial cells. Regulates intestinal inflammation by controlling the exocytosis of the major component of colonic mucus MUC2 from colonic goblet cells. This chain is E3 ubiquitin-protein ligase TRIM34B, found in Mus musculus (Mouse).